We begin with the raw amino-acid sequence, 552 residues long: Chromosomal replication initiator protein DnaA (552 aa).

Residues 1–90 form a domain I, interacts with DnaA modulators region; the sequence is MWNETWNEIT…FTVAVTVDPT (90 aa). The interval 90 to 210 is domain II; sequence TLDVIQDLPH…KPAHDPDRNG (121 aa). A disordered region spans residues 113–213; that stretch reads EHPHYSPVSQ…HDPDRNGSLN (101 aa). Positions 155 to 170 are enriched in low complexity; sequence PQPSQSSQSAQQQPAQ. Residues 211–427 form a domain III, AAA+ region region; sequence SLNPRYTFDT…GAFIRVSAYA (217 aa). 4 residues coordinate ATP: Gly255, Gly257, Lys258, and Thr259. Positions 428–552 are domain IV, binds dsDNA; the sequence is SLNEAPINMA…TQQIKSSDRA (125 aa).

Belongs to the DnaA family. As to quaternary structure, oligomerizes as a right-handed, spiral filament on DNA at oriC.

It is found in the cytoplasm. In terms of biological role, plays an essential role in the initiation and regulation of chromosomal replication. ATP-DnaA binds to the origin of replication (oriC) to initiate formation of the DNA replication initiation complex once per cell cycle. Binds the DnaA box (a 9 base pair repeat at the origin) and separates the double-stranded (ds)DNA. Forms a right-handed helical filament on oriC DNA; dsDNA binds to the exterior of the filament while single-stranded (ss)DNA is stabiized in the filament's interior. The ATP-DnaA-oriC complex binds and stabilizes one strand of the AT-rich DNA unwinding element (DUE), permitting loading of DNA polymerase. After initiation quickly degrades to an ADP-DnaA complex that is not apt for DNA replication. Binds acidic phospholipids. The polypeptide is Chromosomal replication initiator protein DnaA (Corynebacterium diphtheriae (strain ATCC 700971 / NCTC 13129 / Biotype gravis)).